The following is a 387-amino-acid chain: Beta-citrylglutamate synthase B (387 aa).

The region spanning 119 to 304 is the ATP-grasp domain; it reads FQELAGHGVP…VAGIIADYAA (186 aa). Residues Lys-158, 193-203, and Arg-219 each bind ATP; that span reads QKYIKESHGRD. Residues Asp-264, Glu-277, and Asn-279 each contribute to the Mg(2+) site. Asp-264, Glu-277, and Asn-279 together coordinate Mn(2+). Positions 325-361 are disordered; sequence ASETSEPELGPPASAAVDNMSASSSSVDSDPESTTER. Low complexity predominate over residues 337–352; the sequence is ASAAVDNMSASSSSVD.

Belongs to the RimK family. Mg(2+) is required as a cofactor. It depends on Mn(2+) as a cofactor. In terms of tissue distribution, strongly expressed in brain and testis. Expressed in eyes, thymus, lung, kidney, skeletal muscle, spleen, skin and heart. Expressed in neurons of the neocortex, the gray matter and Purkinje cells.

It is found in the cytoplasm. It catalyses the reaction citrate + L-glutamate + ATP = beta-citrylglutamate + ADP + phosphate + H(+). It carries out the reaction N-acetyl-L-aspartate + L-glutamate + ATP = N-acetyl-L-aspartyl-L-glutamate + ADP + phosphate + H(+). In terms of biological role, catalyzes the synthesis of beta-citryl-L-glutamate and N-acetyl-L-aspartyl-L-glutamate. Beta-citryl-L-glutamate is synthesized more efficiently than N-acetyl-L-aspartyl-L-glutamate. The polypeptide is Beta-citrylglutamate synthase B (Rimklb) (Mus musculus (Mouse)).